The primary structure comprises 338 residues: MKLTFLGAGAWGTALASHAAATNDVVLWGRDPAQLGAIAATHENAAYLPGVKLSARLAVQADFELAVAHAADDPDGIVVVATPVAGLREMTRRLAARSARPVSMLWLCKGFEAGTHLLPHQMVRAELDAAGRTEGFAYGVLSGPSFAREVAQGLPCALTVAGTEPSLADRAQAAFHHHAMRIYGSDDLTGVEVGGAVKNVLAIATGASDGLGLGLNARAALVTRGLAEMTRLGLALGGRVETFMGLAGVGDLILTATGDLSRNRKVGQQLASGQSLEQVLAGLGHVAEGVRCAQAVAELAATHGIEMPIARAVCAVLFDGLSAADAVAQLLQRDARDE.

The NADPH site is built by W11, R30, and K109. Residues K109, G143, and S145 each contribute to the sn-glycerol 3-phosphate site. Residue A147 participates in NADPH binding. Residues K198, D251, S261, R262, and N263 each coordinate sn-glycerol 3-phosphate. The active-site Proton acceptor is K198. R262 contacts NADPH. NADPH contacts are provided by V286 and E288.

This sequence belongs to the NAD-dependent glycerol-3-phosphate dehydrogenase family.

It localises to the cytoplasm. The enzyme catalyses sn-glycerol 3-phosphate + NAD(+) = dihydroxyacetone phosphate + NADH + H(+). The catalysed reaction is sn-glycerol 3-phosphate + NADP(+) = dihydroxyacetone phosphate + NADPH + H(+). It functions in the pathway membrane lipid metabolism; glycerophospholipid metabolism. Catalyzes the reduction of the glycolytic intermediate dihydroxyacetone phosphate (DHAP) to sn-glycerol 3-phosphate (G3P), the key precursor for phospholipid synthesis. This is Glycerol-3-phosphate dehydrogenase [NAD(P)+] from Cupriavidus taiwanensis (strain DSM 17343 / BCRC 17206 / CCUG 44338 / CIP 107171 / LMG 19424 / R1) (Ralstonia taiwanensis (strain LMG 19424)).